The chain runs to 140 residues: Endoribonuclease YbeY (140 aa).

Zn(2+) is bound by residues His-105, His-109, and Asp-115.

Belongs to the endoribonuclease YbeY family. Zn(2+) serves as cofactor.

It is found in the cytoplasm. Functionally, single strand-specific metallo-endoribonuclease involved in late-stage 70S ribosome quality control and in maturation of the 3' terminus of the 16S rRNA. This Flavobacterium psychrophilum (strain ATCC 49511 / DSM 21280 / CIP 103535 / JIP02/86) protein is Endoribonuclease YbeY.